The sequence spans 293 residues: MDLPGPRWKKGKDGKDFASLAAANPMSAIVSELKASFISSKPVAILSGPGGSAVLGVGPEQAVILNRAAFGHAIENATAQKHWFQLSPEEVFYLCHALNCIRVDSLDNKQMSEIELWDYFRSGSESFPEMYKAYAHLRLKNWVVRSGLQYGADFVAYRHHPALVHSEFAVVVVPEGAEFGNRCGRLEVWSDLLCALRASGSVAKTLLVLTISSSSKCELSSPDCLEQLVVHERTITRWILQQCREQRCEPSRDEVNREELIIEKESVVFNHWGVILGFTVLSGLLVYRLKFRQ.

Catalysis depends on residues Y157, H165, and K204. Residues 267-287 (VVFNHWGVILGFTVLSGLLVY) traverse the membrane as a helical segment.

The protein belongs to the tRNA-intron endonuclease family. TRNA splicing endonuclease is a heterotetramer composed of SEN2, SEN15, SEN34/LENG5 and SEN54.

It localises to the nucleus. Its subcellular location is the membrane. It catalyses the reaction pretRNA = a 3'-half-tRNA molecule with a 5'-OH end + a 5'-half-tRNA molecule with a 2',3'-cyclic phosphate end + an intron with a 2',3'-cyclic phosphate and a 5'-hydroxyl terminus.. Functionally, constitutes one of the two catalytic subunit of the tRNA-splicing endonuclease complex, a complex responsible for identification and cleavage of the splice sites in pre-tRNA. It cleaves pre-tRNA at the 5'- and 3'-splice sites to release the intron. The products are an intron and two tRNA half-molecules bearing 2',3'-cyclic phosphate and 5'-OH termini. There are no conserved sequences at the splice sites, but the intron is invariably located at the same site in the gene, placing the splice sites an invariant distance from the constant structural features of the tRNA body. Probably carries the active site for 5'-splice site cleavage. This chain is Probable tRNA-splicing endonuclease subunit Sen2, found in Oryza sativa subsp. japonica (Rice).